Consider the following 357-residue polypeptide: Peptide chain release factor 1 (357 aa).

Residue Q232 is modified to N5-methylglutamine.

Belongs to the prokaryotic/mitochondrial release factor family. Post-translationally, methylated by PrmC. Methylation increases the termination efficiency of RF1.

The protein resides in the cytoplasm. Its function is as follows. Peptide chain release factor 1 directs the termination of translation in response to the peptide chain termination codons UAG and UAA. This is Peptide chain release factor 1 from Oleidesulfovibrio alaskensis (strain ATCC BAA-1058 / DSM 17464 / G20) (Desulfovibrio alaskensis).